Reading from the N-terminus, the 154-residue chain is 3-hydroxyacyl-[acyl-carrier-protein] dehydratase FabZ (154 aa).

The active site involves His57.

The protein belongs to the thioester dehydratase family. FabZ subfamily.

It is found in the cytoplasm. It catalyses the reaction a (3R)-hydroxyacyl-[ACP] = a (2E)-enoyl-[ACP] + H2O. In terms of biological role, involved in unsaturated fatty acids biosynthesis. Catalyzes the dehydration of short chain beta-hydroxyacyl-ACPs and long chain saturated and unsaturated beta-hydroxyacyl-ACPs. This chain is 3-hydroxyacyl-[acyl-carrier-protein] dehydratase FabZ, found in Sinorhizobium fredii (strain NBRC 101917 / NGR234).